A 163-amino-acid polypeptide reads, in one-letter code: Probable chemoreceptor glutamine deamidase CheD (163 aa).

Belongs to the CheD family.

It catalyses the reaction L-glutaminyl-[protein] + H2O = L-glutamyl-[protein] + NH4(+). Probably deamidates glutamine residues to glutamate on methyl-accepting chemotaxis receptors (MCPs), playing an important role in chemotaxis. This Borrelia turicatae (strain 91E135) protein is Probable chemoreceptor glutamine deamidase CheD.